A 1231-amino-acid chain; its full sequence is MANISSPFGQNEWLVEAMYRKFRDDPSSVDPSWHEFLVDYSPEPTSQPAAEPTRVTSPLVAERAAAAAPQAPPKPADTAAAGNGVVAALAAKTAVPPPAEGDEVAVLRGAAAAVVKNMSASLEVPTATSVRAVPAKLLIDNRIVINNQLKRTRGGKISFTHLLGYALVQAVKKFPNMNRHYTEVDGKPTAVTPAHTNLGLAIDLQGKDGKRSLVVAGIKRCETMRFAQFVTAYEDIVRRARDGKLTTEDFAGVTISLTNPGTIGTVHSVPRLMPGQGAIIGVGAMEYPAEFQGASEERIAELGIGKLITLTSTYDHRIIQGAESGDFLRTIHELLLSDGFWDEVFRELSIPYLPVRWSTDNPDSIVDKNARVMNLIAAYRNRGHLMADTDPLRLDKARFRSHPDLEVLTHGLTLWDLDRVFKVDGFAGAQYKKLRDVLGLLRDAYCRHIGVEYAHILDPEQKEWLEQRVETKHVKPTVAQQKYILSKLNAAEAFETFLQTKYVGQKRFSLEGAESVIPMMDAAIDQCAEHGLDEVVIGMPHRGRLNVLANIVGKPYSQIFTEFEGNLNPSQAHGSGDVKYHLGATGLYLQMFGDNDIQVSLTANPSHLEAVDPVLEGLVRAKQDLLDHGSIDSDGQRAFSVVPLMLHGDAAFAGQGVVAETLNLANLPGYRVGGTIHIIVNNQIGFTTAPEYSRSSEYCTDVAKMIGAPIFHVNGDDPEACVWVARLAVDFRQRFKKDVVIDMLCYRRRGHNEGDDPSMTNPYMYDVVDTKRGARKSYTEALIGRGDISMKEAEDALRDYQGQLERVFNEVRELEKHGVQPSESVESDQMIPAGLATAVDKSLLARIGDAFLALPNGFTAHPRVQPVLEKRREMAYEGKIDWAFGELLALGSLVAEGKLVRLSGQDSRRGTFSQRHSVLIDRHTGEEFTPLQLLATNSDGSPTGGKFLVYDSPLSEYAAVGFEYGYTVGNPDAVVLWEAQFGDFVNGAQSIIDEFISSGEAKWGQLSNVVLLLPHGHEGQGPDHTSARIERFLQLWAEGSMTIAMPSTPSNYFHLLRRHALDGIQRPLIVFTPKSMLRHKAAVSEIKDFTEIKFRSVLEEPTYEDGIGDRNKVSRILLTSGKLYYELAARKAKDNRNDLAIVRLEQLAPLPRRRLRETLDRYENVKEFFWVQEEPANQGAWPRFGLELPELLPDKLAGIKRISRRAMSAPSSGSSKVHAVEQQEILDEAFG.

The interval 1-41 (MANISSPFGQNEWLVEAMYRKFRDDPSSVDPSWHEFLVDYS) is 2-oxoglutarate dehydrogenase E1, N-terminal part. The span at 24-37 (DDPSSVDPSWHEFL) shows a compositional bias: basic and acidic residues. The tract at residues 24 to 56 (DDPSSVDPSWHEFLVDYSPEPTSQPAAEPTRVT) is disordered. Residues 42 to 88 (PEPTSQPAAEPTRVTSPLVAERAAAAAPQAPPKPADTAAAGNGVVAA) are linker. Residues 89–337 (LAAKTAVPPP…LRTIHELLLS (249 aa)) are succinyltransferase E2. The active-site Proton acceptor; for succinyltransferase activity is histidine 316. The segment at 338–1231 (DGFWDEVFRE…QQEILDEAFG (894 aa)) is 2-oxoglutarate dehydrogenase E1, C-terminal part. Arginine 542 serves as a coordination point for thiamine diphosphate. 2-oxoglutarate is bound by residues histidine 581 and serine 606. Residues serine 606, leucine 608, aspartate 649, alanine 650, alanine 651, and asparagine 682 each coordinate thiamine diphosphate. Residue aspartate 649 coordinates Mg(2+). Residues asparagine 682 and isoleucine 684 each coordinate Mg(2+). Residues 787–817 (DISMKEAEDALRDYQGQLERVFNEVRELEKH) are a coiled coil. Histidine 1024 contacts 2-oxoglutarate. 7 residues coordinate acetyl-CoA: threonine 1042, arginine 1058, lysine 1093, serine 1096, glutamine 1146, arginine 1153, and arginine 1154.

It belongs to the 2-oxoacid dehydrogenase family. Kgd subfamily. Homodimer. The 2-oxoglutarate dehydrogenase (ODH) complex contains multiple copies of three enzymatic components: 2-oxoglutarate dehydrogenase (E1), dihydrolipoamide succinyltransferase (E2) and lipoamide dehydrogenase (E3). Mg(2+) serves as cofactor. It depends on thiamine diphosphate as a cofactor.

It catalyses the reaction glyoxylate + 2-oxoglutarate + H(+) = 2-hydroxy-3-oxoadipate + CO2. It carries out the reaction 2-oxoglutarate + H(+) = succinate semialdehyde + CO2. The enzyme catalyses N(6)-[(R)-lipoyl]-L-lysyl-[protein] + 2-oxoglutarate + H(+) = N(6)-[(R)-S(8)-succinyldihydrolipoyl]-L-lysyl-[protein] + CO2. The catalysed reaction is N(6)-[(R)-dihydrolipoyl]-L-lysyl-[protein] + succinyl-CoA = N(6)-[(R)-S(8)-succinyldihydrolipoyl]-L-lysyl-[protein] + CoA. It participates in carbohydrate metabolism; tricarboxylic acid cycle; succinate from 2-oxoglutarate (transferase route): step 1/2. Its pathway is carbohydrate metabolism; tricarboxylic acid cycle; succinyl-CoA from 2-oxoglutarate (dehydrogenase route): step 1/1. Alpha-ketoglutarate dehydrogenase and decarboxylase activities are inhibited by unphosphorylated GarA, and allosterically activated by acetyl-CoA, the main substrate of the TCA cycle. In terms of biological role, shows three enzymatic activities that share a first common step, the attack of thiamine-PP on 2-oxoglutarate (alpha-ketoglutarate, KG), leading to the formation of an enamine-thiamine-PP intermediate upon decarboxylation. Thus, displays KGD activity, catalyzing the decarboxylation from five-carbon 2-oxoglutarate to four-carbon succinate semialdehyde (SSA). Also catalyzes C-C bond formation between the activated aldehyde formed after decarboxylation of alpha-ketoglutarate and the carbonyl of glyoxylate (GLX), to yield 2-hydroxy-3-oxoadipate (HOA), which spontaneously decarboxylates to form 5-hydroxylevulinate (HLA). And is also a component of the 2-oxoglutarate dehydrogenase (ODH) complex, that catalyzes the overall conversion of 2-oxoglutarate to succinyl-CoA and CO(2). The KG decarboxylase and KG dehydrogenase reactions provide two alternative, tightly regulated, pathways connecting the oxidative and reductive branches of the TCA cycle. The sequence is that of Multifunctional 2-oxoglutarate metabolism enzyme (kgd) from Mycobacterium bovis (strain ATCC BAA-935 / AF2122/97).